An 89-amino-acid polypeptide reads, in one-letter code: Cell division protein FtsL (89 aa).

Residues 1 to 22 (MIDRKHYHLVGSIGKDILNNGK) lie on the Cytoplasmic side of the membrane. Residues 23–40 (LPALLLIAVLASSSLVVI) traverse the membrane as a helical segment. At 41–89 (TTYQTRRLTVEREQLLLEQNILDIEWRNLILEDNVISDQSRFEFVATEQ) the chain is on the periplasmic side.

The protein belongs to the FtsL family. Part of a complex composed of FtsB, FtsL and FtsQ.

The protein resides in the cell inner membrane. Functionally, essential cell division protein. May link together the upstream cell division proteins, which are predominantly cytoplasmic, with the downstream cell division proteins, which are predominantly periplasmic. This chain is Cell division protein FtsL, found in Moranella endobia (strain PCIT).